The following is a 136-amino-acid chain: Putative covalently bound cell wall protein 22 (136 aa).

An N-terminal signal peptide occupies residues Met-1–Ala-18. Asn-21 and Asn-82 each carry an N-linked (GlcNAc...) asparagine glycan. Residues Pro-73–Val-110 are disordered. Residues Lys-99–Val-110 show a composition bias toward low complexity. Gly-115 carries GPI-anchor amidated glycine lipidation. A propeptide spans Ala-116 to Leu-136 (removed in mature form).

Belongs to the PGA59 family. Post-translationally, the GPI-anchor is attached to the protein in the endoplasmic reticulum and serves to target the protein to the cell surface. There, the glucosamine-inositol phospholipid moiety is cleaved off and the GPI-modified mannoprotein is covalently attached via its lipidless GPI glycan remnant to the 1,6-beta-glucan of the outer cell wall layer.

It localises to the secreted. Its subcellular location is the cell wall. It is found in the membrane. Functionally, cell wall protein necessary for cell wall integrity. The polypeptide is Putative covalently bound cell wall protein 22 (CCW22) (Saccharomyces cerevisiae (strain ATCC 204508 / S288c) (Baker's yeast)).